A 496-amino-acid chain; its full sequence is uncharacterized protein (496 aa).

The next 13 helical transmembrane spans lie at 5 to 25 (LTAL…GFLA), 45 to 65 (FGGL…YTFL), 77 to 97 (VAFF…FFLP), 127 to 147 (LVAI…LSGI), 161 to 181 (VKFV…FSGI), 193 to 213 (ILVW…HFNG), 239 to 259 (IPWF…WAHA), 278 to 298 (FLPL…IAFL), 325 to 345 (FAYA…AIGA), 374 to 394 (MVFV…TALV), 396 to 416 (LQLL…VSLF), 424 to 444 (ATVI…ITQS), and 450 to 470 (EGFW…PLFV).

This sequence belongs to the sodium:solute symporter (SSF) (TC 2.A.21) family.

It localises to the cell membrane. This is an uncharacterized protein from Bacillus subtilis (strain 168).